Here is a 196-residue protein sequence, read N- to C-terminus: Large ribosomal subunit protein eL15 (196 aa).

Residues Arg162–Lys196 form a disordered region.

This sequence belongs to the eukaryotic ribosomal protein eL15 family.

In Haloquadratum walsbyi (strain DSM 16790 / HBSQ001), this protein is Large ribosomal subunit protein eL15.